A 209-amino-acid polypeptide reads, in one-letter code: Large ribosomal subunit protein uL3 (209 aa).

Residues 122–151 (AIKRHGQSRGPMSHGSRYHRRPGSMGPVDP) form a disordered region.

Belongs to the universal ribosomal protein uL3 family. Part of the 50S ribosomal subunit. Forms a cluster with proteins L14 and L19.

Its function is as follows. One of the primary rRNA binding proteins, it binds directly near the 3'-end of the 23S rRNA, where it nucleates assembly of the 50S subunit. The polypeptide is Large ribosomal subunit protein uL3 (Bacillus velezensis (strain DSM 23117 / BGSC 10A6 / LMG 26770 / FZB42) (Bacillus amyloliquefaciens subsp. plantarum)).